The primary structure comprises 808 residues: Digalactosyldiacylglycerol synthase 1, chloroplastic (808 aa).

The disordered stretch occupies residues 1–23 (MVKETLIPPSSTSMTTGTSSSSS). The transit peptide at 1–58 (MVKETLIPPSSTSMTTGTSSSSSLSMTLSSTNALSFLSKGWREVWDSADADLQLMRDR) directs the protein to the chloroplast. A compositionally biased stretch (low complexity) spans 10–23 (SSTSMTTGTSSSSS).

This sequence belongs to the glycosyltransferase group 1 family. Glycosyltransferase 4 subfamily.

The protein localises to the plastid. It is found in the chloroplast outer membrane. It carries out the reaction a 1,2-diacyl-3-O-(beta-D-galactosyl)-sn-glycerol + UDP-alpha-D-galactose = a 1,2-diacyl-3-O-[alpha-D-galactosyl-(1-&gt;6)-beta-D-galactosyl]-sn-glycerol + UDP + H(+). In terms of biological role, involved in the synthesis of diacylglycerol galactolipids that are specifically found in thylakoid membranes. Specific for alpha-glycosidic linkages. Responsible for the final assembly of galactolipids in photosynthetic membranes. Digalactosyldiacylglycerol (DGDG) provides stability to the photosystem I (PSI) complex, especially to the PsaA, PsaB, PsaC, PsaL and PsaH subunits. This chain is Digalactosyldiacylglycerol synthase 1, chloroplastic, found in Arabidopsis thaliana (Mouse-ear cress).